Consider the following 253-residue polypeptide: 4-hydroxy-tetrahydrodipicolinate reductase (253 aa).

Residue 16-21 (GDTGRM) coordinates NAD(+). Arg-44 is a binding site for NADP(+). NAD(+) is bound by residues 85-87 (GTT) and 111-114 (CANT). The active-site Proton donor/acceptor is His-144. A (S)-2,3,4,5-tetrahydrodipicolinate-binding site is contributed by His-145. Lys-148 serves as the catalytic Proton donor. 154 to 155 (GT) contacts (S)-2,3,4,5-tetrahydrodipicolinate.

Belongs to the DapB family.

It localises to the cytoplasm. It catalyses the reaction (S)-2,3,4,5-tetrahydrodipicolinate + NAD(+) + H2O = (2S,4S)-4-hydroxy-2,3,4,5-tetrahydrodipicolinate + NADH + H(+). The enzyme catalyses (S)-2,3,4,5-tetrahydrodipicolinate + NADP(+) + H2O = (2S,4S)-4-hydroxy-2,3,4,5-tetrahydrodipicolinate + NADPH + H(+). It functions in the pathway amino-acid biosynthesis; L-lysine biosynthesis via DAP pathway; (S)-tetrahydrodipicolinate from L-aspartate: step 4/4. Functionally, catalyzes the conversion of 4-hydroxy-tetrahydrodipicolinate (HTPA) to tetrahydrodipicolinate. The polypeptide is 4-hydroxy-tetrahydrodipicolinate reductase (Chlamydia trachomatis serovar A (strain ATCC VR-571B / DSM 19440 / HAR-13)).